Reading from the N-terminus, the 568-residue chain is MNSNNWLAFPLSPTHSSLPPHIHSSQNSHFNLGLVNDNIDNPFQNQGWNMINPHGGGGEGGEVPKVADFLGVSKSGDHHTDHNLVPYNDIHQTNASDYYFQTNSLLPTVVTCASNAPNNYELQESAHNLQSLTLSMGSTGAAAAEVATVKASPAETSADNSSSTTNTSGGAIVEATPRRTLETFGQRTSIYRGVTRHRWTGRYEAHLWDNSCRREGQSRKGRQVYLGGYDKEEKAARAYDLAALKYWGPSTTTNFPITNYEKEVEEMKNMTRQEFVASIRRKSSGFSRGASMYRGVTRHHQHGRWQARIGRVAGNKDLYLGTFSTEEEAAEAYDIAAIKFRGLNAVTNFEINRYDVKAILESNTLPIGGGAAKRLKEAQALESSRKREEMIALGSNFHQYGAASGSSSVASSSRLQLQPYPLSIQQPFEHLHHHQPLLTLQNNNDISQYHDSFSYIQTQLHLHQQQTNNYLQSSSHTSQLYNAYLQSNPGLLHGFVSDNNNTSGFLGNNGIGIGSSSTVGSSAEEEFPAVKVDYDMPPSGGATGYGGWNSGESAQGSNPGGVFTMWNE.

Over residues Ala151–Ala171 the composition is skewed to low complexity. Residues Ala151–Val173 are disordered. 2 consecutive DNA-binding regions (AP2/ERF) follow at residues Ile190–Pro256 and Met292–Glu350. The segment at Trp548–Glu568 is disordered.

It belongs to the AP2/ERF transcription factor family. AP2 subfamily. Stabilized in root meristems by reactive oxygen species (ROS) mediated oxidative post-translational modification triggered by RGF1 hormone peptide in a RITF1-dependent manner. Expressed in roots, seedlings, flowers, and siliques. Also detected at low levels in leaves. In roots, specifically detected in the distal root meristem, including the QC. This tissue specificity is regulated by auxin gradient and depends on PIN proteins.

Its subcellular location is the nucleus. Functionally, probably acts as a transcriptional activator. Binds to the GCC-box pathogenesis-related promoter element. May be involved in the regulation of gene expression by stress factors and by components of stress signal transduction pathways. Master regulator of basal/root fate. Essential for root quiescent center (QC) and columella specification, stem cell activity, as well as for establishment of the stem cell niche during embryogenesis. Modulates the root polar auxin transport by regulating the distribution of PIN genes. Essential role in respecifying pattern and polarity in damaged roots. Direct target of the transcriptional corepressor TPL. Expression levels and patterns regulated post-transcriptionally by root meristem growth factors (RGFs). The chain is AP2-like ethylene-responsive transcription factor PLT2 from Arabidopsis thaliana (Mouse-ear cress).